A 262-amino-acid chain; its full sequence is Type III pantothenate kinase (262 aa).

9-16 contributes to the ATP binding site; it reads DIGNTNVK. Residues Y103 and 110-113 each bind substrate; that span reads GADR. The active-site Proton acceptor is the D112. Position 134 (D134) interacts with K(+). An ATP-binding site is contributed by T137. T190 provides a ligand contact to substrate.

The protein belongs to the type III pantothenate kinase family. In terms of assembly, homodimer. It depends on NH4(+) as a cofactor. K(+) is required as a cofactor.

It localises to the cytoplasm. The enzyme catalyses (R)-pantothenate + ATP = (R)-4'-phosphopantothenate + ADP + H(+). The protein operates within cofactor biosynthesis; coenzyme A biosynthesis; CoA from (R)-pantothenate: step 1/5. Catalyzes the phosphorylation of pantothenate (Pan), the first step in CoA biosynthesis. The protein is Type III pantothenate kinase of Nitratidesulfovibrio vulgaris (strain DSM 19637 / Miyazaki F) (Desulfovibrio vulgaris).